The chain runs to 158 residues: Large ribosomal subunit protein uL11 (158 aa).

The disordered stretch occupies residues 1–28 (MAGTIEALVPGGQATPGPPLGPELGPTP).

The protein belongs to the universal ribosomal protein uL11 family. In terms of assembly, part of the ribosomal stalk of the 50S ribosomal subunit. Interacts with L10 and the large rRNA to form the base of the stalk. L10 forms an elongated spine to which L12 dimers bind in a sequential fashion forming a multimeric L10(L12)X complex.

Functionally, forms part of the ribosomal stalk which helps the ribosome interact with GTP-bound translation factors. This Halorubrum lacusprofundi (strain ATCC 49239 / DSM 5036 / JCM 8891 / ACAM 34) protein is Large ribosomal subunit protein uL11.